The primary structure comprises 413 residues: Multidrug resistance protein MdtA (413 aa).

Residues 1–20 (MKGSNTFRWAIAIGVVVAAA) form the signal peptide. 2 disordered regions span residues 31-57 (SPTA…RDGP) and 391-413 (EPQT…GARA). Low complexity predominate over residues 32 to 49 (PTAAPGVAAQAQHTAAAG). The segment covering 397–413 (ADEKSPSRHEGQKGARA) has biased composition (basic and acidic residues).

Belongs to the membrane fusion protein (MFP) (TC 8.A.1) family. Part of a tripartite efflux system composed of MdtA, MdtB and MdtC.

Its subcellular location is the cell inner membrane. In Salmonella typhi, this protein is Multidrug resistance protein MdtA.